A 349-amino-acid polypeptide reads, in one-letter code: Protein-glutamate methylesterase/protein-glutamine glutaminase (349 aa).

Residues 5-122 enclose the Response regulatory domain; sequence KVLVVDDSAF…SLDLYKVKDE (118 aa). The residue at position 56 (Asp56) is a 4-aspartylphosphate. The CheB-type methylesterase domain occupies 156 to 349; it reads ARPQQAIVAI…AAAIVQLIGE (194 aa). Catalysis depends on residues Ser168, His195, and Asp291.

It belongs to the CheB family. In terms of processing, phosphorylated by CheA. Phosphorylation of the N-terminal regulatory domain activates the methylesterase activity.

It localises to the cytoplasm. The catalysed reaction is [protein]-L-glutamate 5-O-methyl ester + H2O = L-glutamyl-[protein] + methanol + H(+). It catalyses the reaction L-glutaminyl-[protein] + H2O = L-glutamyl-[protein] + NH4(+). Involved in chemotaxis. Part of a chemotaxis signal transduction system that modulates chemotaxis in response to various stimuli. Catalyzes the demethylation of specific methylglutamate residues introduced into the chemoreceptors (methyl-accepting chemotaxis proteins or MCP) by CheR. Also mediates the irreversible deamidation of specific glutamine residues to glutamic acid. In Geobacillus kaustophilus (strain HTA426), this protein is Protein-glutamate methylesterase/protein-glutamine glutaminase.